Reading from the N-terminus, the 138-residue chain is Large ribosomal subunit protein uL16 (138 aa).

A compositionally biased stretch (basic residues) spans 1-15 (MLSPKKVKYRKKQRG). The interval 1-20 (MLSPKKVKYRKKQRGRLSGE) is disordered.

Belongs to the universal ribosomal protein uL16 family. Part of the 50S ribosomal subunit.

Functionally, binds 23S rRNA and is also seen to make contacts with the A and possibly P site tRNAs. The sequence is that of Large ribosomal subunit protein uL16 from Borrelia hermsii (strain HS1 / DAH).